Reading from the N-terminus, the 181-residue chain is HGPRTase-like protein 2 (181 aa).

It belongs to the purine/pyrimidine phosphoribosyltransferase family. Archaeal HPRT subfamily.

May catalyze a purine salvage reaction, the substrate is unknown. The chain is HGPRTase-like protein 2 from Natrialba magadii (strain ATCC 43099 / DSM 3394 / CCM 3739 / CIP 104546 / IAM 13178 / JCM 8861 / NBRC 102185 / NCIMB 2190 / MS3) (Natronobacterium magadii).